The following is a 150-amino-acid chain: H/ACA ribonucleoprotein complex subunit 2-like protein (150 aa).

Belongs to the eukaryotic ribosomal protein eL8 family. Component of the small nucleolar ribonucleoprotein particle containing H/ACA-type snoRNAs (H/ACA snoRNPs). Component of the telomerase holoenzyme complex.

Its subcellular location is the nucleus. The protein resides in the nucleolus. Its function is as follows. Required for ribosome biogenesis. Part of a complex which catalyzes pseudouridylation of rRNA. This involves the isomerization of uridine such that the ribose is subsequently attached to C5, instead of the normal N1. Pseudouridine ('psi') residues may serve to stabilize the conformation of rRNAs. This is H/ACA ribonucleoprotein complex subunit 2-like protein (nhp2) from Danio rerio (Zebrafish).